A 551-amino-acid polypeptide reads, in one-letter code: Pyrroline-5-carboxylate reductase 1 (551 aa).

The interval 279 to 551 (LYTQKQQNKK…RHEVKTEQIN (273 aa)) is disordered. Low complexity-rich tracts occupy residues 282-298 (QKQQ…QQHQ), 306-342 (QQHQ…YGHQ), 383-415 (QQYQ…SNQR), 424-441 (KSPQ…QPSS), 448-475 (QQQQ…QQQP), 487-496 (QQQQPQQQQQ), and 503-520 (YNNN…NNYN). Residues 537–551 (YHDEKRHEVKTEQIN) show a composition bias toward basic and acidic residues.

It belongs to the pyrroline-5-carboxylate reductase family. Homodecamer; composed of 5 homodimers.

The enzyme catalyses L-proline + NADP(+) = (S)-1-pyrroline-5-carboxylate + NADPH + 2 H(+). The catalysed reaction is L-proline + NAD(+) = (S)-1-pyrroline-5-carboxylate + NADH + 2 H(+). Its pathway is amino-acid biosynthesis; L-proline biosynthesis; L-proline from L-glutamate 5-semialdehyde: step 1/1. The polypeptide is Pyrroline-5-carboxylate reductase 1 (pycr1) (Dictyostelium discoideum (Social amoeba)).